We begin with the raw amino-acid sequence, 307 residues long: MQIRHFLQFKDFDRLEFEYLFDRTRWIKNEFKQYRRYWPLTDRTLAMIFEKHSTRTRLSFEAGMHQLGGSAIYLSTRDTQLGRGEPVEDAARVISRMVDIITIRTHEHQIIERFAENSRVPVINGLTDEYHPCQILADIFTFIEHRGSITGKTITWIGDSNNVCNTWLQAAEIFDFNVHVSTPPGYEVEPERAGLYGTDHYEQFVSPHDAVKDADLVTTDVWTSMGFEDELDTRKNDFADFCVDAEMMACAKKEALFMHCLPAHRGEEVDAEVIDGPQSVVWDEAENRLHTQKALMEYLLLGRISVR.

Carbamoyl phosphate is bound by residues 53–56 (STRT), Q80, R104, and 131–134 (HPCQ). L-ornithine is bound by residues N162, D220, and 224 to 225 (SM). Residues 260–261 (CL) and R288 each bind carbamoyl phosphate.

This sequence belongs to the aspartate/ornithine carbamoyltransferase superfamily. OTCase family.

The protein resides in the cytoplasm. The enzyme catalyses carbamoyl phosphate + L-ornithine = L-citrulline + phosphate + H(+). It functions in the pathway amino-acid biosynthesis; L-arginine biosynthesis; L-arginine from L-ornithine and carbamoyl phosphate: step 1/3. Functionally, reversibly catalyzes the transfer of the carbamoyl group from carbamoyl phosphate (CP) to the N(epsilon) atom of ornithine (ORN) to produce L-citrulline. In Nitrosomonas eutropha (strain DSM 101675 / C91 / Nm57), this protein is Ornithine carbamoyltransferase.